The following is a 279-amino-acid chain: MNPYLILLKPRVIWLLILASLAGYLYSARQPNIAQAFSLLLVAFLSTGGAAAFNHYWERDIDAAMRRTAKRPLPAGLVEPRNALAYSLVLSALGIALGFLLLGPLPGLFVFLGWFFYAVVYTVILKKRTWLNILGGGFAGNATFLGGYALGAGTVDLHAVLISFAIYLWIPSHIWALAYKYRDDYRRAGVPMLPTVVGEKAAVAIISLLNLASAAYIMTLYLAFGGGLLGGALVAAGVVATIATGAYALATKTDEAMWKMYKASSPVLTLFLLALIANA.

Transmembrane regions (helical) follow at residues 5–25 (LILL…AGYL), 33–53 (IAQA…AAAF), 84–103 (LAYS…LLLG), 108–125 (LFVF…TVIL), 133–153 (ILGG…LGAG), 159–179 (AVLI…ALAY), 201–221 (AAVA…MTLY), 222–242 (LAFG…VATI), and 256–276 (AMWK…LALI).

The protein belongs to the UbiA prenyltransferase family. Protoheme IX farnesyltransferase subfamily.

It is found in the cell membrane. It catalyses the reaction heme b + (2E,6E)-farnesyl diphosphate + H2O = Fe(II)-heme o + diphosphate. Its pathway is porphyrin-containing compound metabolism; heme O biosynthesis; heme O from protoheme: step 1/1. Converts heme B (protoheme IX) to heme O by substitution of the vinyl group on carbon 2 of heme B porphyrin ring with a hydroxyethyl farnesyl side group. In Pyrobaculum arsenaticum (strain DSM 13514 / JCM 11321 / PZ6), this protein is Protoheme IX farnesyltransferase.